A 464-amino-acid chain; its full sequence is Protein FAM90A1 (464 aa).

Disordered stretches follow at residues 1-43 (MMAR…PRLK), 71-294 (PNFG…KRSA), 312-386 (PFQI…AASH), 412-437 (PSFHSPEKPGAFLAQSPHVSEKSEGP), and 445-464 (VLYEDLQVPSSSEDSDSDLE). Composition is skewed to basic and acidic residues over residues 74 to 83 (GEKEGKENLK) and 97 to 114 (NKDKGEKEERPRPQDPQR). Over residues 180–197 (LASLSPLRKASLSSSSSL) the composition is skewed to low complexity. Residues 344–355 (TSPQTGTRTPAQ) are compositionally biased toward polar residues.

This sequence belongs to the FAM90 family.

The sequence is that of Protein FAM90A1 (FAM90A1) from Homo sapiens (Human).